A 162-amino-acid chain; its full sequence is 6,7-dimethyl-8-ribityllumazine synthase (162 aa).

5-amino-6-(D-ribitylamino)uracil-binding positions include Tyr27, 58–60 (ALE), and 87–89 (CVI). Residue 92–93 (ET) participates in (2S)-2-hydroxy-3-oxobutyl phosphate binding. The Proton donor role is filled by His95. Residue Asn120 participates in 5-amino-6-(D-ribitylamino)uracil binding. A (2S)-2-hydroxy-3-oxobutyl phosphate-binding site is contributed by Arg134.

It belongs to the DMRL synthase family.

The catalysed reaction is (2S)-2-hydroxy-3-oxobutyl phosphate + 5-amino-6-(D-ribitylamino)uracil = 6,7-dimethyl-8-(1-D-ribityl)lumazine + phosphate + 2 H2O + H(+). The protein operates within cofactor biosynthesis; riboflavin biosynthesis; riboflavin from 2-hydroxy-3-oxobutyl phosphate and 5-amino-6-(D-ribitylamino)uracil: step 1/2. Catalyzes the formation of 6,7-dimethyl-8-ribityllumazine by condensation of 5-amino-6-(D-ribitylamino)uracil with 3,4-dihydroxy-2-butanone 4-phosphate. This is the penultimate step in the biosynthesis of riboflavin. The polypeptide is 6,7-dimethyl-8-ribityllumazine synthase (Azorhizobium caulinodans (strain ATCC 43989 / DSM 5975 / JCM 20966 / LMG 6465 / NBRC 14845 / NCIMB 13405 / ORS 571)).